We begin with the raw amino-acid sequence, 89 residues long: Large ribosomal subunit protein bL27 (89 aa).

Belongs to the bacterial ribosomal protein bL27 family.

The protein is Large ribosomal subunit protein bL27 of Afipia carboxidovorans (strain ATCC 49405 / DSM 1227 / KCTC 32145 / OM5) (Oligotropha carboxidovorans).